The following is a 420-amino-acid chain: UPF0053 protein HI_0107 (420 aa).

Residues 2 to 190 form the CNNM transmembrane domain; that stretch reads DSIPLSTLFI…GEATPNEQHP (189 aa). 4 consecutive transmembrane segments (helical) span residues 3-23, 65-85, 92-112, and 126-146; these read SIPL…SAYF, FILI…TVIG, AGVA…SEIF, and FFSS…VWLM. CBS domains are found at residues 208–268 and 273–333; these read MVPR…KNEF and LIRA…FTTS.

This sequence belongs to the UPF0053 family.

Its subcellular location is the cell membrane. The polypeptide is UPF0053 protein HI_0107 (Haemophilus influenzae (strain ATCC 51907 / DSM 11121 / KW20 / Rd)).